A 435-amino-acid chain; its full sequence is Xylose isomerase (435 aa).

Catalysis depends on residues His100 and Asp103. Residues Glu231, Glu267, His270, Asp295, Asp306, Asp308, and Asp338 each contribute to the Mg(2+) site.

It belongs to the xylose isomerase family. Homotetramer. The cofactor is Mg(2+).

The protein resides in the cytoplasm. It carries out the reaction alpha-D-xylose = alpha-D-xylulofuranose. This Brucella ovis (strain ATCC 25840 / 63/290 / NCTC 10512) protein is Xylose isomerase.